We begin with the raw amino-acid sequence, 1486 residues long: MIERGKFRSLTLINWNGFFARTFDLDELVTTLSGGNGAGKSTTMAAFVTALIPDLTLLHFRNTTEAGATSGSRDKGLHGKLKAGVCYSMLDTINSRHQRVVVGVRLQQVAGRDRKVDIKPFAIQGLPMSVQPTQLVTETLNERQARVLPLNELKDKLEAMEGVQFKQFNSITDYHSLMFDLGIIARRLRSASDRSKFYRLIEASLYGGISSAITRSLRDYLLPENSGVRKAFQDMEAALRENRMTLEAIRVTQSDRDLFKHLISEATNYVAADYMRHANERRVHLDKALEFRRELHTSRQQLAAEQYKHVDMARELAEHNGAEGDLEADYQAASDHLNLVQTAQRQQEKIERYEADLDELQIRLEEQNEVVAEAIERQEENEARAEAAELEVDELKSQLADYQQALDVQQTRAIQYNQAIAALNRAKELCHLPDLTADSAAEWLETFQAKEQEATEKMLSLEQKMSMAQTAHSQFEQAYQLVVAINGPLARNEAWDVARELLREGVDQRHLAEQVQPLRMRLSELEQRLREQQEAERLLADFCKRQGKNFDIDELEALHQELEARIASLSDSVSNAREERMALRQEQEQLQSRIQSLMQRAPVWLAAQNSLNQLSEQCGEEFTSSQDVTEYLQQLLEREREAIVERDEVGARKNAVDEEIERLSQPGGSEDQRLNALAERFGGVLLSEIYDDVSLEDAPYFSALYGPSRHAIVVPDLSQVTEHLEGLTDCPEDLYLIEGDPQSFDDSVFSVDELEKAVVVKIADRQWRYSRFPEVPLFGRAARESRIESLHAEREVLSERFATLSFDVQKTQRLHQAFSRFIGSHLAVAFESDPEAEIRQLNSRRVELERALSNHENDNQQQRIQFEQAKEGVTALNRILPRLNLLADDSLADRVDEIRERLDEAQEAARFVQQFGNQLAKLEPIVSVLQSDPEQFEQLKEDYAYSQQMQRDARQQAFALTEVVQRRAHFSYSDSAEMLSGNSDLNEKLRERLEQAEAERTRAREALRGHAAQLSQYNQVLASLKSSYDTKKELLNDLQRELQDIGVRADSGAEERARIRRDELHAQLSNNRSRRNQLEKALTFCEAEMDNLTRKLRKLERDYFEMREQVVTAKAGWCAVMRMVKDNVVERRLHRRELAYLSADDLRSMSDKALGALRLAVADNEHLRDVLRMSEDPKRPERKIQFFVAVYQHLRERIRQDIIRTDDPVEAIEQMEIELSRLTEELTSREQKLAISSRSVANIIRKTIQREQNRIRMLNQGLQNVSFGQVNSVRLNVNVRETHAMLLDVLSEQHEQHQDLFNSNRLTFSEALAKLYQRLNPQIDMGQRTPQTIGEELLDYRNYLEMEVEVNRGSDGWLRAESGALSTGEAIGTGMSILVMVVQSWEDESRRLRGKDISPCRLLFLDEAARLDARSIATLFELCERLQMQLIIAAPENISPEKGTTYKLVRKVFQNTEHVHVVGLRGFAPQLPETLPGSDEAPSQES.

34–41 is a binding site for ATP; it reads GGNGAGKS. Coiled coils occupy residues 334-418, 444-480, and 509-603; these read SDHL…QYNQ, LETF…QAYQ, and RHLA…RAPV. The segment at 666-783 is flexible hinge; it reads PGGSEDQRLN…EVPLFGRAAR (118 aa). 3 coiled-coil regions span residues 835–923, 977–1115, and 1209–1266; these read EAEI…AKLE, EMLS…TAKA, and VEAI…QNVS.

It belongs to the SMC family. MukB subfamily. As to quaternary structure, homodimerization via its hinge domain. Binds to DNA via its C-terminal region. Interacts, and probably forms a ternary complex, with MukE and MukF via its C-terminal region. The complex formation is stimulated by calcium or magnesium. Interacts with tubulin-related protein FtsZ.

The protein localises to the cytoplasm. It localises to the nucleoid. Functionally, plays a central role in chromosome condensation, segregation and cell cycle progression. Functions as a homodimer, which is essential for chromosome partition. Involved in negative DNA supercoiling in vivo, and by this means organize and compact chromosomes. May achieve or facilitate chromosome segregation by condensation DNA from both sides of a centrally located replisome during cell division. This chain is Chromosome partition protein MukB, found in Shigella sonnei (strain Ss046).